Reading from the N-terminus, the 200-residue chain is Protein GrpE (200 aa).

Positions 1-11 are enriched in polar residues; that stretch reads MSNQTNKAQDN. Residues 1 to 29 are disordered; that stretch reads MSNQTNKAQDNQVEEIVEGELLNENGTEA.

The protein belongs to the GrpE family. Homodimer.

The protein resides in the cytoplasm. Participates actively in the response to hyperosmotic and heat shock by preventing the aggregation of stress-denatured proteins, in association with DnaK and GrpE. It is the nucleotide exchange factor for DnaK and may function as a thermosensor. Unfolded proteins bind initially to DnaJ; upon interaction with the DnaJ-bound protein, DnaK hydrolyzes its bound ATP, resulting in the formation of a stable complex. GrpE releases ADP from DnaK; ATP binding to DnaK triggers the release of the substrate protein, thus completing the reaction cycle. Several rounds of ATP-dependent interactions between DnaJ, DnaK and GrpE are required for fully efficient folding. The polypeptide is Protein GrpE (Shewanella halifaxensis (strain HAW-EB4)).